We begin with the raw amino-acid sequence, 200 residues long: NADH-quinone oxidoreductase subunit B (200 aa).

Residues cysteine 79, cysteine 80, cysteine 144, and cysteine 174 each coordinate [4Fe-4S] cluster.

The protein belongs to the complex I 20 kDa subunit family. NDH-1 is composed of 14 different subunits. Subunits NuoB, C, D, E, F, and G constitute the peripheral sector of the complex. [4Fe-4S] cluster is required as a cofactor.

It localises to the cell inner membrane. It carries out the reaction a quinone + NADH + 5 H(+)(in) = a quinol + NAD(+) + 4 H(+)(out). Its function is as follows. NDH-1 shuttles electrons from NADH, via FMN and iron-sulfur (Fe-S) centers, to quinones in the respiratory chain. The immediate electron acceptor for the enzyme in this species is believed to be ubiquinone. Couples the redox reaction to proton translocation (for every two electrons transferred, four hydrogen ions are translocated across the cytoplasmic membrane), and thus conserves the redox energy in a proton gradient. In Caulobacter vibrioides (strain NA1000 / CB15N) (Caulobacter crescentus), this protein is NADH-quinone oxidoreductase subunit B.